The sequence spans 454 residues: tRNA(Ile)-lysidine synthase (454 aa).

27–32 (SGGSDS) is an ATP binding site.

The protein belongs to the tRNA(Ile)-lysidine synthase family.

The protein localises to the cytoplasm. The catalysed reaction is cytidine(34) in tRNA(Ile2) + L-lysine + ATP = lysidine(34) in tRNA(Ile2) + AMP + diphosphate + H(+). In terms of biological role, ligates lysine onto the cytidine present at position 34 of the AUA codon-specific tRNA(Ile) that contains the anticodon CAU, in an ATP-dependent manner. Cytidine is converted to lysidine, thus changing the amino acid specificity of the tRNA from methionine to isoleucine. This Mesorhizobium japonicum (strain LMG 29417 / CECT 9101 / MAFF 303099) (Mesorhizobium loti (strain MAFF 303099)) protein is tRNA(Ile)-lysidine synthase.